We begin with the raw amino-acid sequence, 101 residues long: Enhancer of yellow 2 transcription factor (101 aa).

The protein belongs to the ENY2 family. Component of the nuclear pore complex (NPC)-associated AMEX complex (anchoring and mRNA export complex), composed of at least e(y)2 and xmas-2. Component of the SAGA transcription coactivator-HAT complexes, at least composed of Ada2b, e(y)2, Pcaf/Gcn5, Taf10 and Nipped-A/Trrap. Within the SAGA complex, e(y)2, Sgf11, and not/nonstop form an additional subcomplex of SAGA called the DUB module (deubiquitination module). Component of the THO complex, composed of at least e(y)2, HPR1, THO2, THOC5, THOC6 and THOC7. Interacts with e(y)1. Interacts with su(Hw) (via zinc fingers). Interacts with xmas-2; required for localization to the nuclear periphery. Interacts with the nuclear pore complex (NPC).

It is found in the nucleus. Its subcellular location is the nucleoplasm. The protein resides in the cytoplasm. Functionally, involved in mRNA export coupled transcription activation by association with both the AMEX and the SAGA complexes. The SAGA complex is a multiprotein complex that activates transcription by remodeling chromatin and mediating histone acetylation and deubiquitination. Within the SAGA complex, participates in a subcomplex that specifically deubiquitinates histone H2B. The SAGA complex is recruited to specific gene promoters by activators, where it is required for transcription. Required for nuclear receptor-mediated transactivation. Involved in transcription elongation by recruiting the THO complex onto nascent mRNA. The AMEX complex functions in docking export-competent ribonucleoprotein particles (mRNPs) to the nuclear entrance of the nuclear pore complex (nuclear basket). AMEX participates in mRNA export and accurate chromatin positioning in the nucleus by tethering genes to the nuclear periphery. In Drosophila simulans (Fruit fly), this protein is Enhancer of yellow 2 transcription factor.